Here is a 131-residue protein sequence, read N- to C-terminus: Small ribosomal subunit protein bS6 (131 aa).

The protein belongs to the bacterial ribosomal protein bS6 family.

In terms of biological role, binds together with bS18 to 16S ribosomal RNA. In Borrelia hermsii (strain HS1 / DAH), this protein is Small ribosomal subunit protein bS6.